Reading from the N-terminus, the 273-residue chain is Shikimate dehydrogenase (NADP(+)) (273 aa).

Residues 14 to 16 (SKS) and Thr-61 each bind shikimate. Lys-65 acts as the Proton acceptor in catalysis. Asp-77 contributes to the NADP(+) binding site. The shikimate site is built by Asn-86 and Asp-102. NADP(+) is bound by residues 127 to 131 (GAGGA), 151 to 156 (NRTGAR), and Met-215. Tyr-217 contacts shikimate. NADP(+) is bound at residue Gly-239.

This sequence belongs to the shikimate dehydrogenase family. Homodimer.

It catalyses the reaction shikimate + NADP(+) = 3-dehydroshikimate + NADPH + H(+). The protein operates within metabolic intermediate biosynthesis; chorismate biosynthesis; chorismate from D-erythrose 4-phosphate and phosphoenolpyruvate: step 4/7. Its function is as follows. Involved in the biosynthesis of the chorismate, which leads to the biosynthesis of aromatic amino acids. Catalyzes the reversible NADPH linked reduction of 3-dehydroshikimate (DHSA) to yield shikimate (SA). The protein is Shikimate dehydrogenase (NADP(+)) of Thioalkalivibrio sulfidiphilus (strain HL-EbGR7).